We begin with the raw amino-acid sequence, 569 residues long: Amyloid-beta A4 precursor protein-binding family A member 3 (569 aa).

At methionine 1 the chain carries N-acetylmethionine. Disordered stretches follow at residues 1–53 (MEFL…MELD) and 124–168 (AQSV…SSPE). The segment covering 19 to 32 (EEPKGPEVPSEDHP) has biased composition (basic and acidic residues). The span at 132-141 (AQAAPRLLQP) shows a compositional bias: low complexity. Phosphoserine is present on residues serine 166 and serine 367. Positions 212-376 (DGVLFGAKYL…SASASHPHNG (165 aa)) constitute a PID domain. PDZ domains follow at residues 389–475 (EVCI…IIHC) and 480–554 (TAVI…TMPA).

In terms of assembly, binds to the cytoplasmic domain of amyloid protein (APP). Interacts with HIF1AN (via N-terminus). Interacts with NECAB3; seems to mediate the interaction between NECAB3 and HIF1AN. Ubiquitous.

It localises to the cytoplasm. The protein localises to the perinuclear region. May modulate processing of the amyloid-beta precursor protein (APP) and hence formation of APP-beta. May enhance the activity of HIF1A in macrophages by inhibiting the activity of HIF1AN. The chain is Amyloid-beta A4 precursor protein-binding family A member 3 (Apba3) from Rattus norvegicus (Rat).